The sequence spans 312 residues: Taste receptor type 2 member 9 (312 aa).

Residues 1–9 (MPSAIEAIY) lie on the Extracellular side of the membrane. The chain crosses the membrane as a helical span at residues 10-32 (IILIAGELTIGIWGNGFIVLVNC). Topologically, residues 33–52 (IDWLKRRDVSLIDIILISLA) are cytoplasmic. The helical transmembrane segment at 53 to 72 (ISRICLLXVISLDGFFMLLF) threads the bilayer. The Extracellular portion of the chain corresponds to 73–86 (PTTYGNSVLVSIVB). Residues 87–109 (IVWTFANNSSLWFTSCLSIFYLL) traverse the membrane as a helical segment. At 110–128 (KIANISHPFFFWLKLKINK) the chain is on the cytoplasmic side. A helical membrane pass occupies residues 129–146 (VILAILLGSFLISLVISV). Residues 147 to 180 (XMNDDMWYHLFKVSHEENITWEFKVSKIPGTFKQ) are Extracellular-facing. Asparagine 164 carries an N-linked (GlcNAc...) asparagine glycan. Residues 181–203 (LTLNLGAMVPFILCLISFSLLLF) form a helical membrane-spanning segment. Residues 204-234 (SLVRHTKQIQLXATGFRDPSTEAHMRAIKAV) are Cytoplasmic-facing. A helical membrane pass occupies residues 235–257 (IIFLLLLIVYYPVFLVMTSSALI). Residues 258 to 261 (PQGK) are Extracellular-facing. Residues 262–284 (LVLMIGDIVTITFPSSHSFILIM) traverse the membrane as a helical segment. The Cytoplasmic segment spans residues 285–312 (GNSKLREAFLKMLRFVKRFLRRRKPFVP).

This sequence belongs to the G-protein coupled receptor T2R family.

The protein localises to the membrane. Its function is as follows. Gustducin-coupled receptor implicated in the perception of bitter compounds in the oral cavity and the gastrointestinal tract. Signals through PLCB2 and the calcium-regulated cation channel TRPM5. This Pongo pygmaeus (Bornean orangutan) protein is Taste receptor type 2 member 9 (TAS2R9).